Here is a 289-residue protein sequence, read N- to C-terminus: Prepilin leader peptidase/N-methyltransferase (289 aa).

The helical transmembrane segment at 13–33 (AFVLCALVLGLLVGSFLNVVI) threads the bilayer. Zn(2+)-binding residues include cysteine 72, cysteine 75, cysteine 97, and cysteine 100. The next 5 helical transmembrane spans lie at 128-148 (FSWQAGAMLLLTWGLLAMSMI), 159-179 (LVLPLLWLGLIINSFGLFASL), 183-203 (LWGAVVGYLALWSVYWLFKLV), 228-248 (VLPLTILLSSVVGAVLGTVML), and 256-276 (GTPIPFGPYLAIAGWVALLWG).

Belongs to the peptidase A24 family. The cofactor is Zn(2+).

It is found in the cell inner membrane. It carries out the reaction Typically cleaves a -Gly-|-Phe- bond to release an N-terminal, basic peptide of 5-8 residues from type IV prepilin, and then N-methylates the new N-terminal amino group, the methyl donor being S-adenosyl-L-methionine.. Its function is as follows. Plays an essential role in type IV pili and type II pseudopili formation by proteolytically removing the leader sequence from substrate proteins and subsequently monomethylating the alpha-amino group of the newly exposed N-terminal phenylalanine. The polypeptide is Prepilin leader peptidase/N-methyltransferase (pilD) (Stutzerimonas stutzeri (Pseudomonas stutzeri)).